The sequence spans 293 residues: Ribosomal protein L11 methyltransferase (293 aa).

4 residues coordinate S-adenosyl-L-methionine: T145, G166, D188, and N230.

This sequence belongs to the methyltransferase superfamily. PrmA family.

It localises to the cytoplasm. It catalyses the reaction L-lysyl-[protein] + 3 S-adenosyl-L-methionine = N(6),N(6),N(6)-trimethyl-L-lysyl-[protein] + 3 S-adenosyl-L-homocysteine + 3 H(+). Methylates ribosomal protein L11. The sequence is that of Ribosomal protein L11 methyltransferase from Citrobacter koseri (strain ATCC BAA-895 / CDC 4225-83 / SGSC4696).